The sequence spans 92 residues: Small ribosomal subunit protein uS19 (92 aa).

It belongs to the universal ribosomal protein uS19 family.

Functionally, protein S19 forms a complex with S13 that binds strongly to the 16S ribosomal RNA. The polypeptide is Small ribosomal subunit protein uS19 (Novosphingobium aromaticivorans (strain ATCC 700278 / DSM 12444 / CCUG 56034 / CIP 105152 / NBRC 16084 / F199)).